The sequence spans 234 residues: Proteasome subunit alpha (234 aa).

Belongs to the peptidase T1A family. In terms of assembly, the 20S proteasome core is composed of 14 alpha and 14 beta subunits that assemble into four stacked heptameric rings, resulting in a barrel-shaped structure. The two inner rings, each composed of seven catalytic beta subunits, are sandwiched by two outer rings, each composed of seven alpha subunits. The catalytic chamber with the active sites is on the inside of the barrel. Has a gated structure, the ends of the cylinder being occluded by the N-termini of the alpha-subunits. Is capped by the proteasome-associated ATPase, ARC.

The protein resides in the cytoplasm. It participates in protein degradation; proteasomal Pup-dependent pathway. The formation of the proteasomal ATPase ARC-20S proteasome complex, likely via the docking of the C-termini of ARC into the intersubunit pockets in the alpha-rings, may trigger opening of the gate for substrate entry. Interconversion between the open-gate and close-gate conformations leads to a dynamic regulation of the 20S proteasome proteolysis activity. Its function is as follows. Component of the proteasome core, a large protease complex with broad specificity involved in protein degradation. This chain is Proteasome subunit alpha, found in Acidothermus cellulolyticus (strain ATCC 43068 / DSM 8971 / 11B).